Here is a 401-residue protein sequence, read N- to C-terminus: Argininosuccinate synthase (401 aa).

ATP contacts are provided by residues 11–19 (AYSGGLDTS) and Ala-38. Tyr-89 and Ser-94 together coordinate L-citrulline. Gly-119 contributes to the ATP binding site. 3 residues coordinate L-aspartate: Thr-121, Asn-125, and Asp-126. Residue Asn-125 coordinates L-citrulline. Residues Arg-129, Ser-177, Ser-186, Glu-262, and Tyr-274 each coordinate L-citrulline.

This sequence belongs to the argininosuccinate synthase family. Type 1 subfamily. Homotetramer.

It localises to the cytoplasm. The catalysed reaction is L-citrulline + L-aspartate + ATP = 2-(N(omega)-L-arginino)succinate + AMP + diphosphate + H(+). It participates in amino-acid biosynthesis; L-arginine biosynthesis; L-arginine from L-ornithine and carbamoyl phosphate: step 2/3. This Nitratidesulfovibrio vulgaris (strain DSM 19637 / Miyazaki F) (Desulfovibrio vulgaris) protein is Argininosuccinate synthase.